Consider the following 218-residue polypeptide: UPF0711 protein C18orf21 homolog (218 aa).

S126 carries the post-translational modification Phosphoserine. A compositionally biased stretch (low complexity) spans 130–146 (ASAASKASPKTPKRAAA). The tract at residues 130–192 (ASAASKASPK…NGSKRKKHFS (63 aa)) is disordered. The residue at position 140 (T140) is a Phosphothreonine. Polar residues predominate over residues 147-156 (GSTNISQSVH). A compositionally biased stretch (low complexity) spans 161–172 (RSPSSTVRTPTS). The segment covering 173–183 (GQSTPICSSRN) has biased composition (polar residues).

The protein belongs to the UPF0711 family.

The chain is UPF0711 protein C18orf21 homolog from Rattus norvegicus (Rat).